The chain runs to 148 residues: Lysozyme C-1 (148 aa).

The N-terminal stretch at 1-18 (MKALLTLGLLLLSVTAQA) is a signal peptide. The 130-residue stretch at 19–148 (KVYNRCELAR…LSQYIRNCGV (130 aa)) folds into the C-type lysozyme domain. 4 disulfides stabilise this stretch: Cys-24-Cys-146, Cys-48-Cys-134, Cys-83-Cys-99, and Cys-95-Cys-113. Catalysis depends on residues Glu-53 and Asp-71.

Belongs to the glycosyl hydrolase 22 family. Monomer. Expressed strongly only in small intestine.

It localises to the secreted. It carries out the reaction Hydrolysis of (1-&gt;4)-beta-linkages between N-acetylmuramic acid and N-acetyl-D-glucosamine residues in a peptidoglycan and between N-acetyl-D-glucosamine residues in chitodextrins.. Lysozymes have primarily a bacteriolytic function; those in tissues and body fluids are associated with the monocyte-macrophage system and enhance the activity of immunoagents. Lyz1 is active against a range of Gram-positive and Gram-negative bacteria. Less effective than Lyz2 in killing Gram-negative bacteria. Lyz1 and Lyz2 are equally effective in killing Gram-positive bacteria. The chain is Lysozyme C-1 (Lyz1) from Mus musculus (Mouse).